An 817-amino-acid polypeptide reads, in one-letter code: tRNA(Met) cytidine acetyltransferase TmcA (817 aa).

Residues Gln265, 289-298, and Arg439 contribute to the ATP site; that span reads GRGKSVSVGI. The N-acetyltransferase domain maps to 469 to 664; that stretch reads ELIRKMEVYL…YTAIVIKPIS (196 aa). Acetyl-CoA is bound by residues 589–591, 596–602, Glu629, and Arg636; these read IAT and MDLGLGS.

Belongs to the RNA cytidine acetyltransferase family. TmcA subfamily.

It localises to the cytoplasm. The catalysed reaction is cytidine(34) in elongator tRNA(Met) + acetyl-CoA + ATP + H2O = N(4)-acetylcytidine(34) in elongator tRNA(Met) + ADP + phosphate + CoA + H(+). The enzyme catalyses a cytidine in RNA + acetyl-CoA + ATP + H2O = an N(4)-acetylcytidine in RNA + ADP + phosphate + CoA + H(+). It carries out the reaction a cytidine in tRNA + acetyl-CoA + ATP + H2O = an N(4)-acetylcytidine in tRNA + ADP + phosphate + CoA + H(+). It catalyses the reaction a cytidine in mRNA + acetyl-CoA + ATP + H2O = an N(4)-acetylcytidine in mRNA + ADP + phosphate + CoA + H(+). In terms of biological role, catalyzes the formation of N(4)-acetylcytidine (ac(4)C) at the wobble position of tRNA(Met), by using acetyl-CoA as an acetyl donor and ATP (or GTP). Functionally, catalyzes the formation of N(4)-acetylcytidine (ac(4)C) sites in rRNA, tRNA, mRNA and non-coding (nc) RNA, almost always on the middle C of a CCG motif. In hyperthermophiles more acetylation is seen at higher temperatures. The polypeptide is tRNA(Met) cytidine acetyltransferase TmcA (Pyrococcus abyssi (strain GE5 / Orsay)).